The following is a 237-amino-acid chain: Ankyrin repeat protein 14 (237 aa).

2 ANK repeats span residues 27-56 (RGET…DVNI) and 60-90 (NGYT…TLDC).

May be involved in virus-host protein interaction through the ankyrin repeats. In Vaccinia virus (strain Western Reserve) (VACV), this protein is Ankyrin repeat protein 14.